We begin with the raw amino-acid sequence, 1531 residues long: DNA topoisomerase 2-alpha (1531 aa).

M1 carries the N-acetylmethionine modification. S4 is subject to Phosphoserine. Residue K17 forms a Glycyl lysine isopeptide (Lys-Gly) (interchain with G-Cter in SUMO2) linkage. ATP-binding positions include N91, N120, and S148 to N150. Residues K156 and K157 each participate in a glycyl lysine isopeptide (Lys-Gly) (interchain with G-Cter in SUMO2) cross-link. Residue G161–K168 coordinates ATP. Residue K261 forms a Glycyl lysine isopeptide (Lys-Gly) (interchain with G-Cter in SUMO2) linkage. A Phosphothreonine modification is found at T282. Residues K342–K344 are interaction with DNA. K352 participates in a covalent cross-link: Glycyl lysine isopeptide (Lys-Gly) (interchain with G-Cter in SUMO2). Q376–K378 contributes to the ATP binding site. Residues K386, K397, K416, K418, K425, and K440 each participate in a glycyl lysine isopeptide (Lys-Gly) (interchain with G-Cter in SUMO2) cross-link. Residues C455 to E572 form the Toprim domain. E461 is a binding site for Mg(2+). Residues K466, K480, and K529 each participate in a glycyl lysine isopeptide (Lys-Gly) (interchain with G-Cter in SUMO2) cross-link. Mg(2+)-binding residues include D541 and D543. Glycyl lysine isopeptide (Lys-Gly) (interchain with G-Cter in SUMO2) cross-links involve residues K584, K599, K614, K622, K625, K632, K639, K655, K662, and K676. The Topo IIA-type catalytic domain occupies I715–L1171. Catalysis depends on Y805, which acts as the O-(5'-phospho-DNA)-tyrosine intermediate. The interaction with DNA stretch occupies residues K990–S999. Residues I1018–K1028 carry the Nuclear export signal motif. A Glycyl lysine isopeptide (Lys-Gly) (interchain with G-Cter in SUMO2) cross-link involves residue K1075. Disordered stretches follow at residues W1090–P1123 and K1184–F1531. The segment covering D1099 to N1108 has biased composition (acidic residues). S1106 is subject to Phosphoserine; by CK1. Glycyl lysine isopeptide (Lys-Gly) (interchain with G-Cter in SUMO2) cross-links involve residues K1114, K1196, and K1204. A Phosphothreonine modification is found at T1205. S1213 is modified (phosphoserine). Residue K1228 forms a Glycyl lysine isopeptide (Lys-Gly) (interchain with G-Cter in SUMO2) linkage. K1240 is covalently cross-linked (Glycyl lysine isopeptide (Lys-Gly) (interchain with G-Cter in SUMO1); alternate). A Glycyl lysine isopeptide (Lys-Gly) (interchain with G-Cter in SUMO2); alternate cross-link involves residue K1240. T1244 carries the phosphothreonine modification. S1247 is subject to Phosphoserine. Positions E1256–T1272 are enriched in basic and acidic residues. Residues K1259, K1276, K1283, and K1286 each participate in a glycyl lysine isopeptide (Lys-Gly) (interchain with G-Cter in SUMO2) cross-link. Phosphoserine is present on residues S1295, S1297, S1299, and S1302. Residue T1327 is modified to Phosphothreonine. Residues L1330 to V1349 show a composition bias toward acidic residues. Residues S1332 and S1337 each carry the phosphoserine modification. Phosphothreonine; by PLK3 is present on T1343. S1351 and S1354 each carry phosphoserine. Glycyl lysine isopeptide (Lys-Gly) (interchain with G-Cter in SUMO2) cross-links involve residues K1363, K1367, and K1373. S1374 and S1377 each carry phosphoserine. K1385 participates in a covalent cross-link: Glycyl lysine isopeptide (Lys-Gly) (interchain with G-Cter in SUMO2). S1387, S1391, S1392, and S1393 each carry phosphoserine. Residues T1406–G1431 are compositionally biased toward low complexity. A Glycyl lysine isopeptide (Lys-Gly) (interchain with G-Cter in SUMO2); alternate cross-link involves residue K1422. An N6-acetyllysine; alternate modification is found at K1422. The interaction with PLSCR1 stretch occupies residues K1433–K1439. K1442 is covalently cross-linked (Glycyl lysine isopeptide (Lys-Gly) (interchain with G-Cter in SUMO2); alternate). Residue K1442 is modified to N6-acetyllysine; alternate. A Phosphoserine modification is found at S1449. Residues K1454 and K1459 each participate in a glycyl lysine isopeptide (Lys-Gly) (interchain with G-Cter in SUMO2) cross-link. A Phosphoserine; by CK2 modification is found at S1469. T1470 is modified (phosphothreonine). Residues S1471, S1474, and S1476 each carry the phosphoserine modification. Residues K1484 and K1492 each participate in a glycyl lysine isopeptide (Lys-Gly) (interchain with G-Cter in SUMO2) cross-link. Residues S1491–F1502 are compositionally biased toward basic and acidic residues. Phosphoserine occurs at positions 1495, 1504, and 1525.

The protein belongs to the type II topoisomerase family. In terms of assembly, homodimer. Interacts with COPS5. Interacts with RECQL5; this stimulates DNA decatenation. Interacts with SETMAR; stimulates the topoisomerase activity. Interacts with DHX9; this interaction occurs in a E2 enzyme UBE2I- and RNA-dependent manner, negatively regulates DHX9-mediated double-stranded DNA and RNA duplex helicase activity and stimulates TOP2A-mediated supercoiled DNA relaxation activity. Interacts with HNRNPU (via C-terminus); this interaction protects the topoisomerase TOP2A from degradation and positively regulates the relaxation of supercoiled DNA in a RNA-dependent manner. Interacts with MCM3AP isoform GANP. Interacts with ERCC6. Interacts with PLSCR1. Interacts with GCNA; this interaction allows the resolution of topoisomerase II (TOP2A) DNA-protein cross-links. Interacts with POL1RA/RPA1 (via dock II) and UBTF in the context of Pol I complex; may assist Pol I transcription initiation by releasing supercoils occurring during DNA unwinding. Interacts with TPRN; TPRN interacts with a number of DNA damage response proteins, is recruited to sites of DNA damage and may play a role in DNA damage repair. It depends on Mg(2+) as a cofactor. Requires Mn(2+) as cofactor. Ca(2+) is required as a cofactor. Phosphorylation has no effect on catalytic activity. However, phosphorylation at Ser-1106 by CSNK1D/CK1 promotes DNA cleavable complex formation. In terms of processing, (Microbial infection) Deubiquitinated by Epstein-Barr virus BPLF1; leading to stabilized SUMOylated TOP2A trapped in cleavage complexes, which halts the DNA damage response to TOP2A-induced double-strand DNA breaks. Post-translationally, SUMOylated. In terms of tissue distribution, expressed in the tonsil, spleen, lymph node, thymus, skin, pancreas, testis, colon, kidney, liver, brain and lung. Also found in high-grade lymphomas, squamous cell lung tumors and seminomas.

It localises to the cytoplasm. Its subcellular location is the nucleus. The protein resides in the nucleoplasm. It is found in the nucleolus. It carries out the reaction ATP-dependent breakage, passage and rejoining of double-stranded DNA.. Its activity is regulated as follows. Specifically inhibited by the intercalating agent amsacrine. Key decatenating enzyme that alters DNA topology by binding to two double-stranded DNA molecules, generating a double-stranded break in one of the strands, passing the intact strand through the broken strand, and religating the broken strand. May play a role in regulating the period length of BMAL1 transcriptional oscillation. The chain is DNA topoisomerase 2-alpha (TOP2A) from Homo sapiens (Human).